Consider the following 503-residue polypeptide: Poxin-Schlafen (503 aa).

Residue histidine 15 is the Proton donor of the active site. Catalysis depends on tyrosine 136, which acts as the Shared with catalytic histidine of dimeric partner. Lysine 140 serves as the catalytic Proton acceptor; shared with catalytic histidine of dimeric partner.

This sequence in the N-terminal section; belongs to the poxin family. It in the C-terminal section; belongs to the Schlafen protein family. Subgroup poxviridae B3 subfamily. As to quaternary structure, homodimer.

The catalysed reaction is 2',3'-cGAMP + H2O = Gp(2'-5')Ap(3') + H(+). In terms of biological role, nuclease that is responsible for viral evasion of host cGAS-STING innate immunity. Cleaves 2',3'-cGAMP which is produced by host cGAS following recognition of cytosolic DNA and blocks the subsequent 2',3'-cGAMP-mediated activation of TMEM173/STING, which normally spreads to adjacent cells and activates the interferon and NF-kappa-B immune responses. In Cynomys gunnisoni (Gunnison's prairie dog), this protein is Poxin-Schlafen (OPG188).